A 601-amino-acid chain; its full sequence is Elongation factor 4 (601 aa).

In terms of domain architecture, tr-type G spans asparagine 6 to histidine 188. Residues aspartate 18–threonine 23 and asparagine 135–aspartate 138 each bind GTP.

The protein belongs to the TRAFAC class translation factor GTPase superfamily. Classic translation factor GTPase family. LepA subfamily.

It localises to the cell inner membrane. It carries out the reaction GTP + H2O = GDP + phosphate + H(+). Functionally, required for accurate and efficient protein synthesis under certain stress conditions. May act as a fidelity factor of the translation reaction, by catalyzing a one-codon backward translocation of tRNAs on improperly translocated ribosomes. Back-translocation proceeds from a post-translocation (POST) complex to a pre-translocation (PRE) complex, thus giving elongation factor G a second chance to translocate the tRNAs correctly. Binds to ribosomes in a GTP-dependent manner. This chain is Elongation factor 4, found in Bartonella quintana (strain Toulouse) (Rochalimaea quintana).